A 435-amino-acid chain; its full sequence is Eukaryotic translation initiation factor 3 subunit E (435 aa).

The PCI domain maps to 219 to 392 (FFNHPKGRDL…GHVVMGTQPL (174 aa)).

Belongs to the eIF-3 subunit E family. As to quaternary structure, component of the eukaryotic translation initiation factor 3 (eIF-3) complex. The eIF-3 complex interacts with pix. Interacts with mxt. In terms of tissue distribution, expression levels in females and males are relatively similar 10 days after oviposition, however by day 15 expression is higher in gravid females than in males (at protein level).

It localises to the cytoplasm. Its subcellular location is the microsome. The protein resides in the endoplasmic reticulum. Its function is as follows. Component of the eukaryotic translation initiation factor 3 (eIF-3) complex, which is involved in protein synthesis of a specialized repertoire of mRNAs and, together with other initiation factors, stimulates binding of mRNA and methionyl-tRNAi to the 40S ribosome. The eIF-3 complex specifically targets and initiates translation of a subset of mRNAs involved in cell proliferation. In addition to its role in the eIF-3 complex, also functions in protein ubiquitination and degradation. During mitosis required for regulating mitotic microtubule growth and kinetochore formation, and consequently is required for satisfying the spindle assembly checkpoint (SAC) during metaphase to prevent delays in mitotic progression. This is likely by promoting the ubiquitination and degradation of Klp67A, a kinesin-like protein that suppresses microtubule polymerization at plus ends. Acts in the COP9 signalosome (CSN) mediated regulation of cullin neddylation by promoting Cul1 and Cul3 neddylation and negatively regulating the CSN complex subunit CSN5. This is Eukaryotic translation initiation factor 3 subunit E from Drosophila melanogaster (Fruit fly).